Here is a 1136-residue protein sequence, read N- to C-terminus: MSTTRPRAATHSASSGSVSRSSKHSARVITQTPVDAKLQAEFEGSVHSFDYTKSIDISGDSSSVPSETVKAYLQRLQKEMLIQPFGCVLAVEEGSCAVVGYSENAPEMLDVVGGAHAVPSIGGQQQEGGGGGGGLLRIGMDARTLFKPASAAALQKAATFADMHLVNPIFVRCNRSGKPFYAILNRIDAGLVIDFEPVMPSDVPVSAAGALQSYKLAAKAISRLQSLPGGDIRLLCDTVVQEVRELTGYDRVMAYRFHEDEHGEVVAEMRRPDLEPYLGLHYPATDIPQASRFLFMKNRVRMICDCCAPPVNVIQDKRLRQPLSLCGSTLRAPHGCHAQYMANMGSIASLVMSVTTNENGDDSEGGGQQQPQNRRKLWGLVVCHHTSPRVIPFPLRYACEFLMQVFGIQLNKEVELAAQLREKHILRVQPVLCDMLLRDAPVGIVSQTPNIMDLVKCDGAALLYGKRLWLLGTTPTEAQILDIADWLLEHHRDSTGLSTDSLAEAGYPGAASLGDAVCGIAAARITSKDFLFWFRSHTAKEIIWGGAKHDPNDKDDGRRMHPRSSFKAFLEVVKRRSLPWEDVEMDAIHSLQLILRDSFHDIDDSDSKTMIHARLNDLRLQGIDELSAVTNEMVRLIETATVPILAIDSNGLVNGWNTKAAELTGLLADEVIGRPLIDLVQHDSVEIVKKMLYLALQGEEEQNVEIKLKTFGIQEEKGPVVLIVNACSSRDLEENVVGVCFVAQDVTWQRIAMDKFTHLQGDYRAIVQNPNPLIPPIFGADEYGYCSEWNPAMEKLTGWKREEVIGKMLVGEVFGIHRMSCQLKGQDGLTKLRIVLNNAMAGKETEKFPFSFFDRHGKNTEALLSANKRTDAEGIITGVFCFLHVTSTELQQALQVQRMAEQAAMDRLKELAYIRQEIRNPLYGIIFTRKLMESTDLSEEQKQIVQTSALCQRQLVKVLDDADLESIEDGYLELDTIEFTLGTVLDAVVSQGMILSREKGLQLIRDSPEEIKTMCLYGDQLRLQQILSNFLINALRFSTSEGWVGNKVVPTKRHLGSGVNVMHMEFRITHSGQGIPEELIKEMFVHNQDMFQEGLGLYMCQQLVKIMNGDVQYLREAGRSSFIINVEFPLAQTDKQ.

A disordered region spans residues 1-28 (MSTTRPRAATHSASSGSVSRSSKHSARV). Residues 11–20 (HSASSGSVSR) are compositionally biased toward low complexity. The region spanning 231–414 (DIRLLCDTVV…VFGIQLNKEV (184 aa)) is the GAF domain. A phytochromobilin-binding site is contributed by Cys336. PAS domains lie at 629 to 699 (VTNE…LQGE) and 762 to 833 (DYRA…TKLR). Residues 913–1132 (YIRQEIRNPL…IINVEFPLAQ (220 aa)) enclose the Histidine kinase domain.

This sequence belongs to the phytochrome family. Homodimer. Post-translationally, contains one covalently linked phytochromobilin chromophore.

In terms of biological role, regulatory photoreceptor which exists in two forms that are reversibly interconvertible by light: the Pr form that absorbs maximally in the red region of the spectrum and the Pfr form that absorbs maximally in the far-red region. Photoconversion of Pr to Pfr induces an array of morphogenic responses, whereas reconversion of Pfr to Pr cancels the induction of those responses. Pfr controls the expression of a number of nuclear genes including those encoding the small subunit of ribulose-bisphosphate carboxylase, chlorophyll A/B binding protein, protochlorophyllide reductase, rRNA, etc. It also controls the expression of its own gene(s) in a negative feedback fashion. In Picea abies (Norway spruce), this protein is Phytochrome.